Consider the following 487-residue polypeptide: N-succinylglutamate 5-semialdehyde dehydrogenase (487 aa).

The tract at residues 1–23 is disordered; sequence MTHFIKGQWHTGKGHDVASSNPA. 220 to 225 is an NAD(+) binding site; that stretch reads GSSRTG. Active-site residues include Glu243 and Cys277.

The protein belongs to the aldehyde dehydrogenase family. AstD subfamily.

It catalyses the reaction N-succinyl-L-glutamate 5-semialdehyde + NAD(+) + H2O = N-succinyl-L-glutamate + NADH + 2 H(+). Its pathway is amino-acid degradation; L-arginine degradation via AST pathway; L-glutamate and succinate from L-arginine: step 4/5. In terms of biological role, catalyzes the NAD-dependent reduction of succinylglutamate semialdehyde into succinylglutamate. In Shewanella oneidensis (strain ATCC 700550 / JCM 31522 / CIP 106686 / LMG 19005 / NCIMB 14063 / MR-1), this protein is N-succinylglutamate 5-semialdehyde dehydrogenase.